The primary structure comprises 181 residues: Ribulose bisphosphate carboxylase small subunit, chloroplastic 2 (181 aa).

A chloroplast-targeting transit peptide spans 1–57; it reads MAFLIMSSAAAVATGTNAAQASMIAPFTGLKSATSFPVSRKQNLDITSIASNGGRVQ.

This sequence belongs to the RuBisCO small chain family. Heterohexadecamer of 8 large and 8 small subunits.

The protein resides in the plastid. The protein localises to the chloroplast. Its function is as follows. RuBisCO catalyzes two reactions: the carboxylation of D-ribulose 1,5-bisphosphate, the primary event in carbon dioxide fixation, as well as the oxidative fragmentation of the pentose substrate. Both reactions occur simultaneously and in competition at the same active site. Although the small subunit is not catalytic it is essential for maximal activity. The chain is Ribulose bisphosphate carboxylase small subunit, chloroplastic 2 from Nicotiana sylvestris (Wood tobacco).